We begin with the raw amino-acid sequence, 54 residues long: Snake venom 5'-nucleotidase (54 aa).

The Zn(2+) site is built by D11 and H13. N-linked (GlcNAc...) asparagine glycosylation occurs at N46.

The protein belongs to the 5'-nucleotidase family. Zn(2+) is required as a cofactor. In terms of processing, venom 5'-nucleotidases (or a part thereof) may be released into the venom via exosome-like vesicles. They may be attached via a GPI anchor to the membrane of these vesicles. Soluble forms of 5'-nucleotidase might be released by cleavage of the ectodomain in the exosome-like vesicles or venom gland cells. In terms of tissue distribution, expressed by the venom gland.

The protein localises to the membrane. It carries out the reaction a ribonucleoside 5'-phosphate + H2O = a ribonucleoside + phosphate. Functionally, hydrolyzes nucleotides into nucleosides. Snake venom 5'-nucleotidases are widely distributed among venomous snake taxa, but there is a lack of information about their biological activities. They have been shown to inhibit platelet aggregation. This effect may be due to the liberation of inhibitory AMP or adenosine by its action on ADP released upon initiation of aggregation. Venom 5'-nucleotidases are also known to synergistically act in vivo with other toxins like ADPases, phospholipases, and disintegrins to exert a more pronounced anti-coagulant effect. This chain is Snake venom 5'-nucleotidase, found in Gloydius blomhoffii blomhoffii (Japanese mamushi).